Reading from the N-terminus, the 309-residue chain is Acetylglutamate kinase (309 aa).

Substrate contacts are provided by residues 69–70, R91, and N194; that span reads GG.

It belongs to the acetylglutamate kinase family. ArgB subfamily.

Its subcellular location is the cytoplasm. It carries out the reaction N-acetyl-L-glutamate + ATP = N-acetyl-L-glutamyl 5-phosphate + ADP. The protein operates within amino-acid biosynthesis; L-arginine biosynthesis; N(2)-acetyl-L-ornithine from L-glutamate: step 2/4. Functionally, catalyzes the ATP-dependent phosphorylation of N-acetyl-L-glutamate. This chain is Acetylglutamate kinase, found in Vesicomyosocius okutanii subsp. Calyptogena okutanii (strain HA).